Reading from the N-terminus, the 182-residue chain is Large ribosomal subunit protein uL5 (182 aa).

This sequence belongs to the universal ribosomal protein uL5 family. Part of the 50S ribosomal subunit; part of the 5S rRNA/L5/L18/L25 subcomplex. Contacts the 5S rRNA and the P site tRNA. Forms a bridge to the 30S subunit in the 70S ribosome.

Its function is as follows. This is one of the proteins that bind and probably mediate the attachment of the 5S RNA into the large ribosomal subunit, where it forms part of the central protuberance. In the 70S ribosome it contacts protein S13 of the 30S subunit (bridge B1b), connecting the 2 subunits; this bridge is implicated in subunit movement. Contacts the P site tRNA; the 5S rRNA and some of its associated proteins might help stabilize positioning of ribosome-bound tRNAs. This chain is Large ribosomal subunit protein uL5, found in Borreliella afzelii (strain PKo) (Borrelia afzelii).